A 472-amino-acid chain; its full sequence is Adenosylhomocysteinase (472 aa).

The substrate site is built by Thr62, Asp137, and Glu197. 198–200 (TTT) provides a ligand contact to NAD(+). Substrate contacts are provided by Lys227 and Asp231. NAD(+)-binding positions include Asn232, 261 to 266 (GYGDVG), Glu284, Asn319, 340 to 342 (IGH), and Asn385.

The protein belongs to the adenosylhomocysteinase family. Requires NAD(+) as cofactor.

The protein localises to the cytoplasm. It carries out the reaction S-adenosyl-L-homocysteine + H2O = L-homocysteine + adenosine. It functions in the pathway amino-acid biosynthesis; L-homocysteine biosynthesis; L-homocysteine from S-adenosyl-L-homocysteine: step 1/1. Its function is as follows. May play a key role in the regulation of the intracellular concentration of adenosylhomocysteine. This chain is Adenosylhomocysteinase, found in Bordetella bronchiseptica (strain ATCC BAA-588 / NCTC 13252 / RB50) (Alcaligenes bronchisepticus).